Consider the following 158-residue polypeptide: Glutamyl-tRNA(Gln) amidotransferase subunit C, mitochondrial (158 aa).

It belongs to the GatC family. In terms of assembly, subunit of the heterotrimeric GatCAB amidotransferase (AdT) complex, composed of A, B and C subunits.

The protein localises to the mitochondrion. The enzyme catalyses L-glutamyl-tRNA(Gln) + L-glutamine + ATP + H2O = L-glutaminyl-tRNA(Gln) + L-glutamate + ADP + phosphate + H(+). Functionally, allows the formation of correctly charged Gln-tRNA(Gln) through the transamidation of misacylated Glu-tRNA(Gln) in the mitochondria. The reaction takes place in the presence of glutamine and ATP through an activated gamma-phospho-Glu-tRNA(Gln). The polypeptide is Glutamyl-tRNA(Gln) amidotransferase subunit C, mitochondrial (Drosophila grimshawi (Hawaiian fruit fly)).